We begin with the raw amino-acid sequence, 198 residues long: Recombination protein RecR (198 aa).

The C4-type zinc-finger motif lies at 57 to 72; that stretch reads CSVCGHITDKDPCYIC. The Toprim domain maps to 80–175; that stretch reads SVICVVQESK…KVTRIAHGLP (96 aa).

It belongs to the RecR family.

In terms of biological role, may play a role in DNA repair. It seems to be involved in an RecBC-independent recombinational process of DNA repair. It may act with RecF and RecO. This Listeria welshimeri serovar 6b (strain ATCC 35897 / DSM 20650 / CCUG 15529 / CIP 8149 / NCTC 11857 / SLCC 5334 / V8) protein is Recombination protein RecR.